Consider the following 159-residue polypeptide: Cytochrome c-type biogenesis protein CcmE (159 aa).

Residues 1–23 lie on the Cytoplasmic side of the membrane; it reads MNNSSLENSASLKVILKQRKKKR. The helical; Signal-anchor for type II membrane protein transmembrane segment at 24 to 44 threads the bilayer; sequence LLIILLCCLVMAIAASLVVYA. The Periplasmic segment spans residues 45-159; sequence MRHAVSFFRM…RLKKHYSVEK (115 aa). The heme site is built by His-138 and Tyr-142.

Belongs to the CcmE/CycJ family.

The protein resides in the cell inner membrane. Heme chaperone required for the biogenesis of c-type cytochromes. Transiently binds heme delivered by CcmC and transfers the heme to apo-cytochromes in a process facilitated by CcmF and CcmH. The chain is Cytochrome c-type biogenesis protein CcmE from Bartonella tribocorum (strain CIP 105476 / IBS 506).